We begin with the raw amino-acid sequence, 204 residues long: Large ribosomal subunit protein uL22m (204 aa).

Residues 1 to 27 (MAASITASVWGTLLKIHRGLTASGCLP) constitute a mitochondrion transit peptide.

The protein belongs to the universal ribosomal protein uL22 family. Component of the mitochondrial ribosome large subunit (39S) which comprises a 16S rRNA and about 50 distinct proteins.

The protein resides in the mitochondrion. The polypeptide is Large ribosomal subunit protein uL22m (mrpl22) (Xenopus tropicalis (Western clawed frog)).